The following is a 106-amino-acid chain: Large ribosomal subunit protein uL24 (106 aa).

The protein belongs to the universal ribosomal protein uL24 family. As to quaternary structure, part of the 50S ribosomal subunit.

One of two assembly initiator proteins, it binds directly to the 5'-end of the 23S rRNA, where it nucleates assembly of the 50S subunit. Functionally, one of the proteins that surrounds the polypeptide exit tunnel on the outside of the subunit. The sequence is that of Large ribosomal subunit protein uL24 from Spiroplasma kunkelii.